The chain runs to 638 residues: Voltage-gated potassium channel KCNC2 (638 aa).

Residues 1 to 229 (MGKIENNERV…EDPYSSRAAR (229 aa)) lie on the Cytoplasmic side of the membrane. The tract at residues 47 to 75 (LTAAGDKLQPLPPPLSPPPRPPPLSPVPS) is disordered. The segment covering 56–72 (PLPPPLSPPPRPPPLSP) has biased composition (pro residues). Residues H124, C130, C151, and C152 each contribute to the Zn(2+) site. Residues 230 to 248 (FIAFASLFFILVSITTFCL) traverse the membrane as a helical segment. 2 N-linked (GlcNAc...) asparagine glycosylation sites follow: N259 and N266. A helical transmembrane segment spans residues 284 to 303 (YVEGVCVVWFTFEFLVRIVF). Over 304–314 (SPNKLEFIKNL) the chain is Cytoplasmic. The chain crosses the membrane as a helical span at residues 315-337 (LNIIDFVAILPFYLEVGLSGLSS). Residues 346-368 (FLRVVRFVRILRIFKLTRHFVGL) traverse the membrane as a helical; Voltage-sensor segment. Topologically, residues 369–381 (RVLGHTLRASTNE) are cytoplasmic. The chain crosses the membrane as a helical span at residues 382–401 (FLLLIIFLALGVLIFATMIY). K(+)-binding residues include T437, L438, G439, and Y440. The short motif at 437–442 (TLGYGD) is the Selectivity filter element. The chain crosses the membrane as a helical span at residues 451–473 (MLVGALCALAGVLTIAMPVPVIV). The Cytoplasmic segment spans residues 474–638 (NNFGMYYSLA…RSRSPIPSIL (165 aa)). Residues 538-572 (SVLSGDDSTGSEPPLSPPERLPIRRSSTRDKNRRG) form a disordered region. Residue S564 is modified to Phosphoserine; by PKA. S600 is subject to Phosphoserine.

It belongs to the potassium channel family. C (Shaw) (TC 1.A.1.2) subfamily. Kv3.2/KCNC2 sub-subfamily. As to quaternary structure, homotetramer and heterotetramer with other channel-forming alpha subunits, such as KCNC1. Interacts with KCNC1. Homotetramer or heterotetramer channel activity is regulated by association with modulating ancillary subunits such as KCNE1, KCNE2 and KCNE3, creating a functionally diverse range of channel complexes. Interacts with KCNE1, KCNE2 and KCNE3. Post-translationally, phosphorylated by PKA in cortical synaptosomes. cAMP-dependent phosphorylation inhibits channel activity. Histamine H2 receptor- and PKA-induced phosphorylation extends action potential spike duration, reduces action potential spike amplitude, sustains maximum firing frequency in hippocampal interneurons; also reduces the incidence of high-frequency oscillations in hippocampal CA3 pyramidal cell layers. As to expression, expressed in neurons of the visual cortex during postnatal development. Expressed in neurons of the globus pallidus at postnatal age day 7 (P7), onward. Expressed in thalamic relay neurons. Expressed in neurons in layer IV and deeper cortical layers of the neocortex. Expressed in hippocampal interneurons. Expressed in nonpyramidal interneurons in the basolateral amygdala. Expressed in retinal ganglion cells (at protein level). Widely expressed in the brain. Expressed in numerous thalamic relay neurons throughout the dorsal thalamus. Expressed in interneurons of the deep layers V-VI of the cerebral cortex, the CA1 and CA3 pyramidal and dentate gyrus (DG) granule cells of the hippocampus, in neurons of the caudate-putamen, globus pallidus and subthalamic nucleus. Also expressed in the optic layer of interior colliculus, the inferior colliculus, the red nucleus, the medial geniculate, the ventral lateral lemiscus, the reticulotegmental nucleus and in the deep cerebellar nuclei. Expressed in globus pallidus (GP) neurons.

It localises to the cell membrane. The protein localises to the membrane. It is found in the perikaryon. Its subcellular location is the cell projection. The protein resides in the axon. It localises to the synapse. The protein localises to the synaptosome. It is found in the dendrite. Its subcellular location is the postsynaptic cell membrane. The protein resides in the presynaptic cell membrane. It localises to the apical cell membrane. The protein localises to the basolateral cell membrane. It catalyses the reaction K(+)(in) = K(+)(out). Inhibited by Stichodactyla helianthus peptide ShK. Inhibited by millimolar levels of tetraethylammonium (TEA). Contrary to other channels, inhibited only by millimolar levels of 4-aminopyridine (4-AP). In terms of biological role, voltage-gated potassium channel that mediates transmembrane potassium transport in excitable membranes, primarily in the brain. Contributes to the regulation of the fast action potential repolarization and in sustained high-frequency firing in neurons of the central nervous system. Homotetramer channels mediate delayed-rectifier voltage-dependent potassium currents that activate rapidly at high-threshold voltages and inactivate slowly. Forms tetrameric channels through which potassium ions pass in accordance with their electrochemical gradient. The channel alternates between opened and closed conformations in response to the voltage difference across the membrane. Can form functional homotetrameric channels and heterotetrameric channels that contain variable proportions of KCNC1, and possibly other family members as well; channel properties depend on the type of alpha subunits that are part of the channel. Channel properties may be modulated either by the association with ancillary subunits, such as KCNE1, KCNE2 and KCNE3 or indirectly by nitric oxide (NO) through a cGMP- and PKG-mediated signaling cascade, slowing channel activation and deactivation of delayed rectifier potassium channels. Contributes to fire sustained trains of very brief action potentials at high frequency in retinal ganglion cells, thalamocortical and suprachiasmatic nucleus (SCN) neurons and in hippocampal and neocortical interneurons. Sustained maximal action potential firing frequency in inhibitory hippocampal interneurons is negatively modulated by histamine H2 receptor activation in a cAMP- and protein kinase (PKA) phosphorylation-dependent manner. Plays a role in maintaining the fidelity of synaptic transmission in neocortical GABAergic interneurons by generating action potential (AP) repolarization at nerve terminals, thus reducing spike-evoked calcium influx and GABA neurotransmitter release. Required for long-range synchronization of gamma oscillations over distance in the neocortex. Contributes to the modulation of the circadian rhythm of spontaneous action potential firing in suprachiasmatic nucleus (SCN) neurons in a light-dependent manner. This Rattus norvegicus (Rat) protein is Voltage-gated potassium channel KCNC2.